The following is a 249-amino-acid chain: Protection of telomeres protein poz1 (249 aa).

In terms of assembly, interacts with pot1, rap1 and tpz1.

The protein resides in the cytoplasm. Its subcellular location is the nucleus. It is found in the chromosome. It localises to the telomere. In terms of biological role, telomeric DNA-binding protein that negatively regulates telomerase and telomere length. This Schizosaccharomyces pombe (strain 972 / ATCC 24843) (Fission yeast) protein is Protection of telomeres protein poz1 (poz1).